Here is a 130-residue protein sequence, read N- to C-terminus: MNYSKIFIFGIISLILMALFSSTVESVSLKNLKIKNNNNNNNNIENKHKTKKSLELTETQDFGSVKCPDGSLCPNSNTCCSASDGSYACCPTPNAQCCSDKQHCCPYQFTCGNGGNICKPQQGLRFSFNR.

The first 26 residues, 1 to 26 (MNYSKIFIFGIISLILMALFSSTVES), serve as a signal peptide directing secretion. Disulfide bonds link Cys67–Cys79 and Cys73–Cys89.

This sequence belongs to the granulin family. Granulins are disulfide bridged.

Its subcellular location is the secreted. This is Granulin (grn) from Dictyostelium discoideum (Social amoeba).